We begin with the raw amino-acid sequence, 72 residues long: ATP synthase subunit c (72 aa).

The next 2 helical transmembrane spans lie at 1 to 21 and 49 to 69; these read MSLG…GAGI and FIGV…AFIV.

Belongs to the ATPase C chain family. As to quaternary structure, F-type ATPases have 2 components, F(1) - the catalytic core - and F(0) - the membrane proton channel. F(1) has five subunits: alpha(3), beta(3), gamma(1), delta(1), epsilon(1). F(0) has three main subunits: a(1), b(2) and c(10-14). The alpha and beta chains form an alternating ring which encloses part of the gamma chain. F(1) is attached to F(0) by a central stalk formed by the gamma and epsilon chains, while a peripheral stalk is formed by the delta and b chains.

Its subcellular location is the cell membrane. Functionally, f(1)F(0) ATP synthase produces ATP from ADP in the presence of a proton or sodium gradient. F-type ATPases consist of two structural domains, F(1) containing the extramembraneous catalytic core and F(0) containing the membrane proton channel, linked together by a central stalk and a peripheral stalk. During catalysis, ATP synthesis in the catalytic domain of F(1) is coupled via a rotary mechanism of the central stalk subunits to proton translocation. In terms of biological role, key component of the F(0) channel; it plays a direct role in translocation across the membrane. A homomeric c-ring of between 10-14 subunits forms the central stalk rotor element with the F(1) delta and epsilon subunits. The polypeptide is ATP synthase subunit c (Bacillus anthracis (strain A0248)).